The chain runs to 376 residues: Formate dehydrogenase 2 (376 aa).

The substrate site is built by Val-97 and Asn-121. Residues Arg-176 to Ile-177, Asp-197, Pro-244 to Asp-248, Thr-270, Asp-296, and His-325 to Gly-328 each bind NAD(+).

It belongs to the D-isomer specific 2-hydroxyacid dehydrogenase family. FDH subfamily. In terms of assembly, homodimer.

The protein localises to the cytoplasm. It carries out the reaction formate + NAD(+) = CO2 + NADH. Its function is as follows. Catalyzes the NAD(+)-dependent oxidation of formate to carbon dioxide. Formate oxidation is the final step in the methanol oxidation pathway in methylotrophic microorganisms. Has a role in the detoxification of exogenous formate in non-methylotrophic organisms. This is Formate dehydrogenase 2 (FDH2) from Saccharomyces cerevisiae (strain CEN.PK113-7D) (Baker's yeast).